An 83-amino-acid chain; its full sequence is Kunitz-type serine protease inhibitor PILP-2 (83 aa).

A signal peptide spans 1 to 24 (MSSGGLLLLLGLLTLWMELTPVSS). Residues 31 to 81 (CNLLPEPGRCNAIVRAFYYNSRPRKCLEFPYGGCGGNANNFKTIEECQRTC) form the BPTI/Kunitz inhibitor domain. 3 disulfide bridges follow: C31-C81, C40-C64, and C56-C77.

The protein belongs to the venom Kunitz-type family. In terms of tissue distribution, expressed by the venom gland.

It localises to the secreted. Shows weak binding and inhibition of MMP-2 and shows an activity in inhibiting migration and invasion of neuroblastoma. In Bungarus multicinctus (Many-banded krait), this protein is Kunitz-type serine protease inhibitor PILP-2.